Reading from the N-terminus, the 367-residue chain is Peptide chain release factor 1 (367 aa).

An N5-methylglutamine modification is found at Gln-238.

The protein belongs to the prokaryotic/mitochondrial release factor family. Methylated by PrmC. Methylation increases the termination efficiency of RF1.

It localises to the cytoplasm. Its function is as follows. Peptide chain release factor 1 directs the termination of translation in response to the peptide chain termination codons UAG and UAA. This is Peptide chain release factor 1 from Dictyoglomus thermophilum (strain ATCC 35947 / DSM 3960 / H-6-12).